Consider the following 238-residue polypeptide: Urease subunit alpha (238 aa).

The segment at 1–102 is urease gamma; it reads MKLTPKELDK…LVTVHTPIEA (102 aa). The interval 103–238 is urease beta; it reads NGKLVPGELF…DDNYVKTIKE (136 aa).

It in the N-terminal section; belongs to the urease gamma subunit family. The protein in the C-terminal section; belongs to the urease beta subunit family. Heterohexamer of 3 UreA (alpha) and 3 UreB (beta) subunits.

It localises to the cytoplasm. The catalysed reaction is urea + 2 H2O + H(+) = hydrogencarbonate + 2 NH4(+). It participates in nitrogen metabolism; urea degradation; CO(2) and NH(3) from urea (urease route): step 1/1. This chain is Urease subunit alpha, found in Helicobacter pylori (strain P12).